The following is a 421-amino-acid chain: MKVLILGSGVIGVTSAYYLAGAGHDVTVVDRQPEPALETSFANAGEVSPGYSSPWAGPGVPVKAVKWLLMKHGPLVIRPKLDPVMWVWLLKMLRNCTSARYAVNKSRMIPIAEYSRDCLRDLRRDIGIQYDERSQGTLQLFRHQAQLDGTGEDIAVLKQYGVPFEVLGREGCIAVEPALAGVKEKFAGGLRLPQDETGDCHMFTQALAKHAQALGVRFMFNTGIDRIVTDGARVSGVVTSAGVLQADAYVLALGSWSSRLVAPLGISLPVYPVKGYSITVPIKDASGAPESTVMDESYKVAITRLGNRIRVGGTAEISGFSSKLYDARRATLDHSLTDLFPRGGDLSKATFWSGLRPMTPDGPPVIGPTQYANLHLNTGHGTLGWTMSCGSGRVLADMLSGKKPEVDVSALTVDRYAHRFG.

Position 3 to 17 (3 to 17 (VLILGSGVIGVTSAY)) interacts with FAD.

It belongs to the DadA oxidoreductase family. The cofactor is FAD.

It catalyses the reaction a D-alpha-amino acid + A + H2O = a 2-oxocarboxylate + AH2 + NH4(+). In terms of biological role, oxidative deamination of D-amino acids. The polypeptide is D-amino acid dehydrogenase (Bradyrhizobium diazoefficiens (strain JCM 10833 / BCRC 13528 / IAM 13628 / NBRC 14792 / USDA 110)).